A 668-amino-acid chain; its full sequence is Transketolase 1 (668 aa).

His-26 is a binding site for substrate. Thiamine diphosphate contacts are provided by residues His-66 and 114–116; that span reads GPL. A Mg(2+)-binding site is contributed by Asp-155. Thiamine diphosphate is bound by residues Gly-156 and Asn-185. Mg(2+) is bound by residues Asn-185 and Ile-187. 3 residues coordinate substrate: His-261, Arg-358, and Ser-385. His-261 serves as a coordination point for thiamine diphosphate. The active-site Proton donor is Glu-413. Phe-439 is a thiamine diphosphate binding site. Residues His-463, Asp-471, and Arg-522 each contribute to the substrate site.

It belongs to the transketolase family. As to quaternary structure, homodimer. Mg(2+) serves as cofactor. Requires Ca(2+) as cofactor. It depends on Mn(2+) as a cofactor. The cofactor is Co(2+). Thiamine diphosphate is required as a cofactor.

The catalysed reaction is D-sedoheptulose 7-phosphate + D-glyceraldehyde 3-phosphate = aldehydo-D-ribose 5-phosphate + D-xylulose 5-phosphate. Catalyzes the transfer of a two-carbon ketol group from a ketose donor to an aldose acceptor, via a covalent intermediate with the cofactor thiamine pyrophosphate. The chain is Transketolase 1 (tktA) from Pasteurella multocida (strain Pm70).